Reading from the N-terminus, the 276-residue chain is Expansin-A25 (276 aa).

The signal sequence occupies residues 1-27; that stretch reads MKLLEQMVYVECFMIIMATLLVSMSYG. The Expansin-like EG45 domain occupies 73-183; sequence QGACGYGDLF…RRISCARTGG (111 aa). Residues 193-272 enclose the Expansin-like CBD domain; that stretch reads YFLMILPYNV…NWGFGQTFDG (80 aa).

It belongs to the expansin family. Expansin A subfamily.

It is found in the secreted. The protein localises to the cell wall. It localises to the membrane. In terms of biological role, causes loosening and extension of plant cell walls by disrupting non-covalent bonding between cellulose microfibrils and matrix glucans. No enzymatic activity has been found. This is Expansin-A25 (EXPA25) from Arabidopsis thaliana (Mouse-ear cress).